A 215-amino-acid chain; its full sequence is Cytidylate kinase (215 aa).

11-19 (GPTASGKGT) contributes to the ATP binding site.

Belongs to the cytidylate kinase family. Type 1 subfamily.

It is found in the cytoplasm. It catalyses the reaction CMP + ATP = CDP + ADP. The enzyme catalyses dCMP + ATP = dCDP + ADP. The polypeptide is Cytidylate kinase (Polynucleobacter necessarius subsp. necessarius (strain STIR1)).